A 293-amino-acid polypeptide reads, in one-letter code: Pyridoxal 5'-phosphate synthase subunit PdxS (293 aa).

Asp-25 lines the D-ribose 5-phosphate pocket. Lys-82 (schiff-base intermediate with D-ribose 5-phosphate) is an active-site residue. Asp-103 is a binding site for D-ribulose 5-phosphate. Residue Gly-154 participates in D-ribose 5-phosphate binding. Residue Arg-166 participates in D-glyceraldehyde 3-phosphate binding. D-ribose 5-phosphate contacts are provided by residues Gly-215 and Gly-236–Ser-237.

Belongs to the PdxS/SNZ family. Homohexamer and homododecamer. In the presence of PdxT, forms a dodecamer of heterodimers.

It catalyses the reaction aldehydo-D-ribose 5-phosphate + D-glyceraldehyde 3-phosphate + L-glutamine = pyridoxal 5'-phosphate + L-glutamate + phosphate + 3 H2O + H(+). Its pathway is cofactor biosynthesis; pyridoxal 5'-phosphate biosynthesis. In terms of biological role, catalyzes the formation of pyridoxal 5'-phosphate from ribose 5-phosphate (RBP), glyceraldehyde 3-phosphate (G3P) and ammonia. The ammonia is provided by the PdxT subunit. Can also use ribulose 5-phosphate and dihydroxyacetone phosphate as substrates, resulting from enzyme-catalyzed isomerization of RBP and G3P, respectively. In Thermotoga maritima (strain ATCC 43589 / DSM 3109 / JCM 10099 / NBRC 100826 / MSB8), this protein is Pyridoxal 5'-phosphate synthase subunit PdxS.